A 246-amino-acid polypeptide reads, in one-letter code: 23S rRNA (guanosine-2'-O-)-methyltransferase RlmB (246 aa).

Residues Gly196, Ile216, and Leu225 each contribute to the S-adenosyl-L-methionine site.

It belongs to the class IV-like SAM-binding methyltransferase superfamily. RNA methyltransferase TrmH family. RlmB subfamily. Homodimer.

It localises to the cytoplasm. It catalyses the reaction guanosine(2251) in 23S rRNA + S-adenosyl-L-methionine = 2'-O-methylguanosine(2251) in 23S rRNA + S-adenosyl-L-homocysteine + H(+). Functionally, specifically methylates the ribose of guanosine 2251 in 23S rRNA. In Yersinia pestis, this protein is 23S rRNA (guanosine-2'-O-)-methyltransferase RlmB.